The primary structure comprises 293 residues: 4-hydroxy-tetrahydrodipicolinate synthase (293 aa).

Thr47 contributes to the pyruvate binding site. Tyr135 serves as the catalytic Proton donor/acceptor. Lys163 acts as the Schiff-base intermediate with substrate in catalysis. Ile204 contributes to the pyruvate binding site.

This sequence belongs to the DapA family. As to quaternary structure, homotetramer; dimer of dimers.

The protein localises to the cytoplasm. It carries out the reaction L-aspartate 4-semialdehyde + pyruvate = (2S,4S)-4-hydroxy-2,3,4,5-tetrahydrodipicolinate + H2O + H(+). The protein operates within amino-acid biosynthesis; L-lysine biosynthesis via DAP pathway; (S)-tetrahydrodipicolinate from L-aspartate: step 3/4. Functionally, catalyzes the condensation of (S)-aspartate-beta-semialdehyde [(S)-ASA] and pyruvate to 4-hydroxy-tetrahydrodipicolinate (HTPA). In Brachyspira hyodysenteriae (strain ATCC 49526 / WA1), this protein is 4-hydroxy-tetrahydrodipicolinate synthase.